A 599-amino-acid polypeptide reads, in one-letter code: Probable acetolactate synthase large subunit (599 aa).

Glu47 serves as a coordination point for thiamine diphosphate. FAD is bound by residues Arg149, 258 to 279 (HGTK…IGCR), and 301 to 320 (DIDP…IVGD). Positions 404 to 484 (QNQMWMAHYF…VVICIFDNRT (81 aa)) are thiamine pyrophosphate binding. Asp455 and Asn482 together coordinate Mg(2+).

Belongs to the TPP enzyme family. In terms of assembly, dimer of large and small chains. Mg(2+) is required as a cofactor. It depends on thiamine diphosphate as a cofactor.

It carries out the reaction 2 pyruvate + H(+) = (2S)-2-acetolactate + CO2. Its pathway is amino-acid biosynthesis; L-isoleucine biosynthesis; L-isoleucine from 2-oxobutanoate: step 1/4. It participates in amino-acid biosynthesis; L-valine biosynthesis; L-valine from pyruvate: step 1/4. In Methanococcus aeolicus, this protein is Probable acetolactate synthase large subunit (ilvB).